Consider the following 408-residue polypeptide: UV excision repair protein RAD23 homolog B (408 aa).

Residues 1–79 (MLVTLKTLQQ…VVVMVTKPKA (79 aa)) enclose the Ubiquitin-like domain. Low complexity predominate over residues 80-111 (VTTPAPATTQQSNSAATTTVSSSTAPAVTQAP). The segment at 80–176 (VTTPAPATTQ…TSGDSSRSNL (97 aa)) is disordered. Over residues 112-122 (APAPASAPTPT) the composition is skewed to pro residues. Residues 123–143 (PVSVTPAPTTASSEPAPASAA) show a composition bias toward low complexity. Residues 144-153 (KQEKPAERPV) show a composition bias toward basic and acidic residues. The span at 154-174 (ETPVATTPTSTDSTSGDSSRS) shows a compositional bias: low complexity. Phosphothreonine occurs at positions 155 and 164. A Phosphoserine modification is found at Ser-174. A Phosphothreonine modification is found at Thr-186. The UBA 1 domain maps to 188–228 (QSYENMVTEIMSMGYEREQVIAALRASFNNPDRAVEYLLMG). Ser-199 carries the phosphoserine modification. Phosphotyrosine is present on Tyr-202. The disordered stretch occupies residues 236–274 (QAVVDPPPAASTGAPQSSVAAAAATTTATTTTTSSGGHP). A compositionally biased stretch (low complexity) spans 255 to 268 (AAAAATTTATTTTT). An STI1 domain is found at 273–316 (HPLEFLRNQPQFQQMRQIIQQNPSLLPALLQQIGRENPQLLQQI). The region spanning 363-403 (PQEKEAIERLKALGFPEGLVIQAYFACEKNENLAANFLLQQ) is the UBA 2 domain.

It belongs to the RAD23 family. Component of the XPC complex composed of XPC, RAD23B and CETN2. Interacts with NGLY1 and PSMC1. Interacts with ATXN3. Interacts with PSMD4 and PSMC5. Interacts with AMFR. Interacts with VCP; the interaction is indirect and mediated by NGLY1.

It localises to the nucleus. Its subcellular location is the cytoplasm. Functionally, multiubiquitin chain receptor involved in modulation of proteasomal degradation. Binds to polyubiquitin chains. Proposed to be capable to bind simultaneously to the 26S proteasome and to polyubiquitinated substrates and to deliver ubiquitinated proteins to the proteasome. May play a role in endoplasmic reticulum-associated degradation (ERAD) of misfolded glycoproteins by association with PNGase and delivering deglycosylated proteins to the proteasome. In terms of biological role, involved in global genome nucleotide excision repair (GG-NER) by acting as component of the XPC complex. Cooperatively with CETN2 appears to stabilize XPC. May protect XPC from proteasomal degradation. Its function is as follows. The XPC complex is proposed to represent the first factor bound at the sites of DNA damage and together with other core recognition factors, XPA, RPA and the TFIIH complex, is part of the pre-incision (or initial recognition) complex. The XPC complex recognizes a wide spectrum of damaged DNA characterized by distortions of the DNA helix such as single-stranded loops, mismatched bubbles or single-stranded overhangs. The orientation of XPC complex binding appears to be crucial for inducing a productive NER. XPC complex is proposed to recognize and to interact with unpaired bases on the undamaged DNA strand which is followed by recruitment of the TFIIH complex and subsequent scanning for lesions in the opposite strand in a 5'-to-3' direction by the NER machinery. Cyclobutane pyrimidine dimers (CPDs) which are formed upon UV-induced DNA damage esacpe detection by the XPC complex due to a low degree of structural perurbation. Instead they are detected by the UV-DDB complex which in turn recruits and cooperates with the XPC complex in the respective DNA repair. In vitro, the XPC:RAD23B dimer is sufficient to initiate NER; it preferentially binds to cisplatin and UV-damaged double-stranded DNA and also binds to a variety of chemically and structurally diverse DNA adducts. XPC:RAD23B contacts DNA both 5' and 3' of a cisplatin lesion with a preference for the 5' side. XPC:RAD23B induces a bend in DNA upon binding. XPC:RAD23B stimulates the activity of DNA glycosylases TDG and SMUG1. The protein is UV excision repair protein RAD23 homolog B (RAD23B) of Bos taurus (Bovine).